A 427-amino-acid chain; its full sequence is Inward rectifier potassium channel 2 (427 aa).

Residues 1–81 (MGSVRTNRYS…IFTTCVDIRW (81 aa)) lie on the Cytoplasmic side of the membrane. Residue cysteine 76 is modified to S-nitrosocysteine. The chain crosses the membrane as a helical span at residues 82 to 106 (RWMLVIFCLAFVLSWLFFGCVFWLI). The Extracellular portion of the chain corresponds to 107–128 (ALLHGDLDASKESKACVSEVNS). The segment at residues 129–140 (FTAAFLFSIETQ) is an intramembrane region (helical; Pore-forming). The pore-forming intramembrane region spans 141–147 (TTIGYGF). The Selectivity filter motif lies at 142–147 (TIGYGF). The Extracellular segment spans residues 148–156 (RCVTDECPV). The helical transmembrane segment at 157–178 (AVFMVVFQSIVGCIIDAFIIGA) threads the bilayer. At 179–427 (VMAKMAKPKK…PRPLRRESEI (249 aa)) the chain is on the cytoplasmic side. The interval 181–208 (AKMAKPKKRNETLVFSHNAVIAMRDGKL) is polyphosphoinositide (PIP2)-binding. The disordered stretch occupies residues 384 to 427 (SKEEDDSENGVPESTSTDTPPDLDLHNQASVPLEPRPLRRESEI). A PDZ-binding motif is present at residues 425 to 427 (SEI).

This sequence belongs to the inward rectifier-type potassium channel (TC 1.A.2.1) family. KCNJ2 subfamily. As to quaternary structure, homotetramer. Homomultimeric and heteromultimeric association with KCNJ4/Kir2.3. Can form heteromeric channels with Kir2.6/KCNJ18. Associates, via its PDZ-recognition domain, with a complex containing LIN7A, LIN7B, LIN7C, DLG1, CASK and APBA1. S-nitrosylation increases the open probability and inward rectifying currents.

Its subcellular location is the cell membrane. It localises to the sarcolemma. It is found in the T-tubule. It catalyses the reaction K(+)(in) = K(+)(out). With respect to regulation, activated by phosphatidylinositol 4,5 biphosphate (PtdIns(4,5)P2). Its function is as follows. Inward rectifier potassium channels are characterized by a greater tendency to allow potassium to flow into the cell rather than out of it. Their voltage dependence is regulated by the concentration of extracellular potassium; as external potassium is raised, the voltage range of the channel opening shifts to more positive voltages. The inward rectification is mainly due to the blockage of outward current by internal magnesium. Blocked by external barium or cesium. Probably participates in establishing action potential waveform and excitability of neuronal and muscle tissues. The chain is Inward rectifier potassium channel 2 (KCNJ2) from Canis lupus familiaris (Dog).